The sequence spans 463 residues: Argininosuccinate lyase (463 aa).

2-(N(omega)-L-arginino)succinate contacts are provided by Ser27, Asn115, and Thr161. The Proton acceptor role is filled by His162. The Proton donor role is filled by Ser283. Residues Asn291, Tyr323, Gln328, and Lys331 each contribute to the 2-(N(omega)-L-arginino)succinate site.

Belongs to the lyase 1 family. Argininosuccinate lyase subfamily. Homotetramer.

The enzyme catalyses 2-(N(omega)-L-arginino)succinate = fumarate + L-arginine. It participates in amino-acid biosynthesis; L-arginine biosynthesis; L-arginine from L-ornithine and carbamoyl phosphate: step 3/3. This Saccharomyces paradoxus (Yeast) protein is Argininosuccinate lyase (ARG4).